We begin with the raw amino-acid sequence, 113 residues long: UPF0482 protein KPK_2871 (113 aa).

Residues 1-28 (MNMTLNKRWCLTAILALSAVVYTSSSFA) form the signal peptide. Positions 38–61 (GDSAQSRQQASMEKEQWNDTRSLR) are disordered. The segment covering 39–48 (DSAQSRQQAS) has biased composition (polar residues). Basic and acidic residues predominate over residues 49-59 (MEKEQWNDTRS).

This sequence belongs to the UPF0482 family.

The chain is UPF0482 protein KPK_2871 from Klebsiella pneumoniae (strain 342).